We begin with the raw amino-acid sequence, 334 residues long: S-adenosylmethionine:tRNA ribosyltransferase-isomerase (334 aa).

Belongs to the QueA family. In terms of assembly, monomer.

It localises to the cytoplasm. The enzyme catalyses 7-aminomethyl-7-carbaguanosine(34) in tRNA + S-adenosyl-L-methionine = epoxyqueuosine(34) in tRNA + adenine + L-methionine + 2 H(+). The protein operates within tRNA modification; tRNA-queuosine biosynthesis. Functionally, transfers and isomerizes the ribose moiety from AdoMet to the 7-aminomethyl group of 7-deazaguanine (preQ1-tRNA) to give epoxyqueuosine (oQ-tRNA). The protein is S-adenosylmethionine:tRNA ribosyltransferase-isomerase of Thermosipho melanesiensis (strain DSM 12029 / CIP 104789 / BI429).